A 70-amino-acid chain; its full sequence is Bowman-Birk type proteinase inhibitor A7 (70 aa).

4 cysteine pairs are disulfide-bonded: cysteine 12–cysteine 31, cysteine 18–cysteine 29, cysteine 38–cysteine 45, and cysteine 42–cysteine 59.

This sequence belongs to the Bowman-Birk serine protease inhibitor family. In terms of tissue distribution, expressed in bulb (at protein level).

In terms of biological role, serine protease inhibitor. Strongly inhibits trypsin (Ki = 7.1 nM) and almost completely inhibits elastase. Also inhibits chymotrypsin (Ki = 19 nM). Does not inhibit bacterial subtilisin. This is Bowman-Birk type proteinase inhibitor A7 from Hyacinthus orientalis (Common hyacinth).